The primary structure comprises 994 residues: Protein translocase subunit SecA (994 aa).

ATP contacts are provided by residues Gln85, 103 to 107 (GEGKT), and Asp492. Over residues 868–888 (IPDGAGPVADAQPVRPAAARQ) the composition is skewed to low complexity. Positions 868-994 (IPDGAGPVAD…HGDPARRNTE (127 aa)) are disordered. Pro residues predominate over residues 889–900 (TPPPPSPVPSAP). Zn(2+) is bound by residues Cys973, Cys975, Cys984, and His985. A compositionally biased stretch (basic and acidic residues) spans 984–994 (CHGDPARRNTE).

Belongs to the SecA family. In terms of assembly, monomer and homodimer. Part of the essential Sec protein translocation apparatus which comprises SecA, SecYEG and auxiliary proteins SecDF. Other proteins may also be involved. Zn(2+) is required as a cofactor.

Its subcellular location is the cell membrane. It is found in the cytoplasm. It carries out the reaction ATP + H2O + cellular proteinSide 1 = ADP + phosphate + cellular proteinSide 2.. Part of the Sec protein translocase complex. Interacts with the SecYEG preprotein conducting channel. Has a central role in coupling the hydrolysis of ATP to the transfer of proteins into and across the cell membrane, serving as an ATP-driven molecular motor driving the stepwise translocation of polypeptide chains across the membrane. In Frankia casuarinae (strain DSM 45818 / CECT 9043 / HFP020203 / CcI3), this protein is Protein translocase subunit SecA.